The chain runs to 302 residues: Enolase-phosphatase E1 (302 aa).

Basic residues predominate over residues 1-10; sequence MSDSRLRRRQ. The tract at residues 1-25 is disordered; that stretch reads MSDSRLRRRQGTAGTDNKRRADGPH. A compositionally biased stretch (basic and acidic residues) spans 16 to 25; the sequence is DNKRRADGPH. Mg(2+)-binding residues include D40 and E42. Residues 183–184 and K217 each bind substrate; that span reads SS. D242 is a binding site for Mg(2+).

The protein belongs to the HAD-like hydrolase superfamily. MasA/MtnC family. In terms of assembly, monomer. Mg(2+) serves as cofactor.

It is found in the cytoplasm. The protein localises to the nucleus. It carries out the reaction 5-methylsulfanyl-2,3-dioxopentyl phosphate + H2O = 1,2-dihydroxy-5-(methylsulfanyl)pent-1-en-3-one + phosphate. The protein operates within amino-acid biosynthesis; L-methionine biosynthesis via salvage pathway; L-methionine from S-methyl-5-thio-alpha-D-ribose 1-phosphate: step 3/6. Its pathway is amino-acid biosynthesis; L-methionine biosynthesis via salvage pathway; L-methionine from S-methyl-5-thio-alpha-D-ribose 1-phosphate: step 4/6. Its function is as follows. Bifunctional enzyme that catalyzes the enolization of 2,3-diketo-5-methylthiopentyl-1-phosphate (DK-MTP-1-P) into the intermediate 2-hydroxy-3-keto-5-methylthiopentenyl-1-phosphate (HK-MTPenyl-1-P), which is then dephosphorylated to form the acireductone 1,2-dihydroxy-3-keto-5-methylthiopentene (DHK-MTPene). The protein is Enolase-phosphatase E1 of Branchiostoma floridae (Florida lancelet).